The sequence spans 345 residues: N-acetyl-gamma-glutamyl-phosphate reductase (345 aa).

The active site involves C149.

Belongs to the NAGSA dehydrogenase family. Type 1 subfamily.

The protein resides in the cytoplasm. It carries out the reaction N-acetyl-L-glutamate 5-semialdehyde + phosphate + NADP(+) = N-acetyl-L-glutamyl 5-phosphate + NADPH + H(+). Its pathway is amino-acid biosynthesis; L-arginine biosynthesis; N(2)-acetyl-L-ornithine from L-glutamate: step 3/4. Functionally, catalyzes the NADPH-dependent reduction of N-acetyl-5-glutamyl phosphate to yield N-acetyl-L-glutamate 5-semialdehyde. The sequence is that of N-acetyl-gamma-glutamyl-phosphate reductase from Geobacillus sp. (strain WCH70).